The chain runs to 100 residues: MEFTAEQLSQYNGTDESKPIYVAIKGRVFDVTTGKSFYGSGGDYSMFAGKDASRALGKMSKNEEDVSPSLEGLTEKEINTLNDWETKFEAKYPVVGRVVS.

M1 carries the N-acetylmethionine modification. Positions 1 to 82 (MEFTAEQLSQ…LTEKEINTLN (82 aa)) constitute a Cytochrome b5 heme-binding domain. The sterol-binding stretch occupies residues 1 to 82 (MEFTAEQLSQ…LTEKEINTLN (82 aa)).

The protein belongs to the cytochrome b5 family. MAPR subfamily.

Its subcellular location is the nucleus. The polypeptide is Probable steroid-binding protein 3 (MP3) (Arabidopsis thaliana (Mouse-ear cress)).